Consider the following 507-residue polypeptide: ATP synthase subunit alpha, chloroplastic (507 aa).

ATP is bound at residue 170 to 177; that stretch reads GDRQTGKT.

Belongs to the ATPase alpha/beta chains family. F-type ATPases have 2 components, CF(1) - the catalytic core - and CF(0) - the membrane proton channel. CF(1) has five subunits: alpha(3), beta(3), gamma(1), delta(1), epsilon(1). CF(0) has four main subunits: a, b, b' and c.

The protein resides in the plastid. The protein localises to the chloroplast thylakoid membrane. It catalyses the reaction ATP + H2O + 4 H(+)(in) = ADP + phosphate + 5 H(+)(out). Functionally, produces ATP from ADP in the presence of a proton gradient across the membrane. The alpha chain is a regulatory subunit. The polypeptide is ATP synthase subunit alpha, chloroplastic (Gossypium barbadense (Sea Island cotton)).